The primary structure comprises 136 residues: MGKDTIADLLTSIRNADMNKKGTVRVVSTNITENIVKILLREGFIESVRKHQESNRYFLVSTLRHQRRKTRKGIYRTRTFLKRISRPGLRIYANYQGIPKVLGGMGIAILSTSRGIMTDREARLNRIGGEVLCYIW.

It belongs to the universal ribosomal protein uS8 family. As to quaternary structure, part of the 30S ribosomal subunit.

Its subcellular location is the plastid. The protein localises to the chloroplast. In terms of biological role, one of the primary rRNA binding proteins, it binds directly to 16S rRNA central domain where it helps coordinate assembly of the platform of the 30S subunit. This Saccharum officinarum (Sugarcane) protein is Small ribosomal subunit protein uS8c (rps8).